The primary structure comprises 450 residues: 3-phosphoshikimate 1-carboxyvinyltransferase (450 aa).

The 3-phosphoshikimate site is built by lysine 28, serine 29, and arginine 33. Residue lysine 28 coordinates phosphoenolpyruvate. Phosphoenolpyruvate-binding residues include glycine 100 and arginine 128. 3-phosphoshikimate contacts are provided by serine 173, glutamine 175, aspartate 326, and lysine 353. Residue glutamine 175 participates in phosphoenolpyruvate binding. Aspartate 326 acts as the Proton acceptor in catalysis. Positions 357 and 402 each coordinate phosphoenolpyruvate.

Belongs to the EPSP synthase family. Monomer.

The protein localises to the cytoplasm. It catalyses the reaction 3-phosphoshikimate + phosphoenolpyruvate = 5-O-(1-carboxyvinyl)-3-phosphoshikimate + phosphate. Its pathway is metabolic intermediate biosynthesis; chorismate biosynthesis; chorismate from D-erythrose 4-phosphate and phosphoenolpyruvate: step 6/7. In terms of biological role, catalyzes the transfer of the enolpyruvyl moiety of phosphoenolpyruvate (PEP) to the 5-hydroxyl of shikimate-3-phosphate (S3P) to produce enolpyruvyl shikimate-3-phosphate and inorganic phosphate. The chain is 3-phosphoshikimate 1-carboxyvinyltransferase from Brucella melitensis biotype 2 (strain ATCC 23457).